Consider the following 379-residue polypeptide: Probable pectin lyase B (379 aa).

The first 20 residues, 1 to 20 (MHYKLLFAAAAASLASAVSA), serve as a signal peptide directing secretion. 2 disulfides stabilise this stretch: C83-C102 and C92-C226. N-linked (GlcNAc...) asparagine glycans are attached at residues N129 and N252. R256 is a catalytic residue. Residues C323 and C331 are joined by a disulfide bond.

It belongs to the polysaccharide lyase 1 family.

Its subcellular location is the secreted. The enzyme catalyses Eliminative cleavage of (1-&gt;4)-alpha-D-galacturonan methyl ester to give oligosaccharides with 4-deoxy-6-O-methyl-alpha-D-galact-4-enuronosyl groups at their non-reducing ends.. In terms of biological role, pectinolytic enzymes consist of four classes of enzymes: pectin lyase, polygalacturonase, pectin methylesterase and rhamnogalacturonase. Among pectinolytic enzymes, pectin lyase is the most important in depolymerization of pectin, since it cleaves internal glycosidic bonds of highly methylated pectins. The polypeptide is Probable pectin lyase B (pelB) (Aspergillus niger (strain ATCC MYA-4892 / CBS 513.88 / FGSC A1513)).